The chain runs to 225 residues: Thymidylate kinase (225 aa).

Residue 12 to 19 coordinates ATP; that stretch reads GGEGAGKS.

Belongs to the thymidylate kinase family.

It catalyses the reaction dTMP + ATP = dTDP + ADP. Functionally, phosphorylation of dTMP to form dTDP in both de novo and salvage pathways of dTTP synthesis. This chain is Thymidylate kinase, found in Chelativorans sp. (strain BNC1).